A 120-amino-acid chain; its full sequence is U13-lycotoxin-Ls1a (120 aa).

The N-terminal stretch at 1 to 16 (MKILFVLISILYAVYC) is a signal peptide. Residues 17 to 54 (FSSEEDVDSAYLANELEPVEDINSEQYAALEPKEEQGR) constitute a propeptide that is removed on maturation. Intrachain disulfides connect C56–C70, C63–C76, C69–C87, and C78–C85. The region spanning 56–95 (CADMGQDCKDDCDCCLNIATCNCWFGRYFCSCTFGDYQTC) is the Agouti domain.

This sequence belongs to the neurotoxin 05 (agouti) family. Post-translationally, contains 6 disulfide bonds. Expressed by the venom gland.

The protein localises to the secreted. In Lycosa singoriensis (Wolf spider), this protein is U13-lycotoxin-Ls1a.